A 471-amino-acid chain; its full sequence is 6-phosphogluconate dehydrogenase, decarboxylating (471 aa).

NADP(+) contacts are provided by residues 10–15 (GLAVMG), 33–35 (NRT), 75–77 (VKA), and asparagine 103. Substrate is bound by residues asparagine 103 and 129-131 (SGG). Lysine 183 (proton acceptor) is an active-site residue. 186-187 (HN) is a binding site for substrate. The Proton donor role is filled by glutamate 190. Residues tyrosine 191, lysine 263, arginine 290, arginine 449, and histidine 455 each contribute to the substrate site.

The protein belongs to the 6-phosphogluconate dehydrogenase family. As to quaternary structure, homodimer.

It catalyses the reaction 6-phospho-D-gluconate + NADP(+) = D-ribulose 5-phosphate + CO2 + NADPH. It functions in the pathway carbohydrate degradation; pentose phosphate pathway; D-ribulose 5-phosphate from D-glucose 6-phosphate (oxidative stage): step 3/3. Its function is as follows. Catalyzes the oxidative decarboxylation of 6-phosphogluconate to ribulose 5-phosphate and CO(2), with concomitant reduction of NADP to NADPH. This chain is 6-phosphogluconate dehydrogenase, decarboxylating (gnd), found in Synechococcus elongatus (strain ATCC 33912 / PCC 7942 / FACHB-805) (Anacystis nidulans R2).